Here is a 224-residue protein sequence, read N- to C-terminus: Adenylate kinase (224 aa).

10 to 15 (GSGKST) contributes to the ATP binding site. The interval 30–59 (SSGDMIRAEIEKGSELGKELKKYLAKGELI) is NMP. Residues Ser-31, Arg-36, 57–59 (ELI), 83–86 (GYPR), and Gln-90 each bind AMP. Positions 124 to 161 (GRRICPKCGAVYHLRYRPPKVPGKCDLCGSQLIQREDD) are LID. Arg-125 contributes to the ATP binding site. Zn(2+) contacts are provided by Cys-128 and Cys-131. 134–135 (VY) is an ATP binding site. Positions 148 and 151 each coordinate Zn(2+). AMP-binding residues include Arg-158 and Arg-169. Gly-197 contacts ATP.

Belongs to the adenylate kinase family. In terms of assembly, monomer.

It localises to the cytoplasm. The catalysed reaction is AMP + ATP = 2 ADP. It functions in the pathway purine metabolism; AMP biosynthesis via salvage pathway; AMP from ADP: step 1/1. Its function is as follows. Catalyzes the reversible transfer of the terminal phosphate group between ATP and AMP. Plays an important role in cellular energy homeostasis and in adenine nucleotide metabolism. This is Adenylate kinase from Thermococcus onnurineus (strain NA1).